Here is a 449-residue protein sequence, read N- to C-terminus: Hyaluronidase-1 (449 aa).

Positions 1-39 are cleaved as a signal peptide; that stretch reads MKPFSPEVSPDPCPATAAHLLRTYTLFLTLLELAQGCRG. Intrachain disulfides connect cysteine 58-cysteine 348 and cysteine 222-cysteine 236. N-linked (GlcNAc...) asparagine glycans are attached at residues asparagine 85 and asparagine 114. Glutamate 146 (proton donor) is an active-site residue. 3 N-linked (GlcNAc...) asparagine glycosylation sites follow: asparagine 231, asparagine 252, and asparagine 365. Intrachain disulfides connect cysteine 373–cysteine 384, cysteine 378–cysteine 433, and cysteine 435–cysteine 444. Residues 433–444 form the EGF-like domain; that stretch reads CRCYRGWSGEWC.

The protein belongs to the glycosyl hydrolase 56 family.

The protein localises to the secreted. The protein resides in the lysosome. The catalysed reaction is Random hydrolysis of (1-&gt;4)-linkages between N-acetyl-beta-D-glucosamine and D-glucuronate residues in hyaluronate.. Its function is as follows. May have a role in promoting tumor progression. May block the TGFB1-enhanced cell growth. Overexpression of HYAL1 suppressed the growth rate of colon carcinoma cell tumors in an experimental model. In Rattus norvegicus (Rat), this protein is Hyaluronidase-1 (Hyal1).